We begin with the raw amino-acid sequence, 61 residues long: Metallothionein-1F (61 aa).

Position 1 is an N-acetylmethionine (Met1). Residues 1 to 29 (MDPNCSCPTGGSCTCAGSCTCKACRCTSC) form a beta region. 18 residues coordinate a divalent metal cation: Cys5, Cys7, Cys13, Cys15, Cys19, Cys21, Cys24, Cys26, Cys29, Cys33, Cys34, Cys36, Cys37, Cys41, Cys44, Cys48, Cys50, and Cys57. Positions 30–61 (KKSCCSCCPAGCAKCAQGCICKGASDKCSCCA) are alpha. The residue at position 58 (Ser58) is a Phosphoserine. The a divalent metal cation site is built by Cys59 and Cys60.

Belongs to the metallothionein superfamily. Type 1 family. As to quaternary structure, monomer.

Functionally, metallothioneins have a high content of cysteine residues that bind various heavy metals; these proteins are transcriptionally regulated by both heavy metals and glucocorticoids. This Sus scrofa (Pig) protein is Metallothionein-1F (MT1F).